The primary structure comprises 178 residues: Inner membrane-spanning protein YciB (178 aa).

A run of 5 helical transmembrane segments spans residues 12–32, 50–70, 74–94, 120–140, and 145–165; these read LFFAAYSLTGNIYLATGVAIV, PMQWVSLALILVLGGLTLVLH, FIMWKPTVLYWLLGAGFLISD, LTFAWSGFFAFMGALNLFVAF, and AVWVNFKLFGGMGLMLVFVLA.

The protein belongs to the YciB family.

Its subcellular location is the cell inner membrane. Functionally, plays a role in cell envelope biogenesis, maintenance of cell envelope integrity and membrane homeostasis. The polypeptide is Inner membrane-spanning protein YciB (Laribacter hongkongensis (strain HLHK9)).